The sequence spans 385 residues: Mannitol-1-phosphate 5-dehydrogenase (385 aa).

3 to 14 (ALHFGAGNIGRG) contributes to the NAD(+) binding site.

The protein belongs to the mannitol dehydrogenase family.

It catalyses the reaction D-mannitol 1-phosphate + NAD(+) = beta-D-fructose 6-phosphate + NADH + H(+). This chain is Mannitol-1-phosphate 5-dehydrogenase, found in Pasteurella multocida (strain Pm70).